Consider the following 568-residue polypeptide: 3-(3-hydroxy-phenyl)propionate/3-hydroxycinnamic acid hydroxylase (568 aa).

Residues 13-42 (DVVI…IVEE) and 278-288 (FRKGRMFLAGD) contribute to the FAD site.

The protein belongs to the PheA/TfdB FAD monooxygenase family. It depends on FAD as a cofactor.

The catalysed reaction is 3-(3-hydroxyphenyl)propanoate + NADH + O2 + H(+) = 3-(2,3-dihydroxyphenyl)propanoate + NAD(+) + H2O. It catalyses the reaction (2E)-3-(3-hydroxyphenyl)prop-2-enoate + NADH + O2 + H(+) = (2E)-3-(2,3-dihydroxyphenyl)prop-2-enoate + NAD(+) + H2O. The protein operates within aromatic compound metabolism; 3-phenylpropanoate degradation. Its function is as follows. Catalyzes the insertion of one atom of molecular oxygen into position 2 of the phenyl ring of 3-(3-hydroxyphenyl)propionate (3-HPP) and hydroxycinnamic acid (3HCI). This is 3-(3-hydroxy-phenyl)propionate/3-hydroxycinnamic acid hydroxylase from Mycobacterium sp. (strain JLS).